We begin with the raw amino-acid sequence, 171 residues long: Auxin-responsive protein IAA33 (171 aa).

Polar residues-rich tracts occupy residues 1 to 11 (MNSFEPQSQDS) and 19 to 32 (DNST…TTTP). The tract at residues 1-51 (MNSFEPQSQDSLQRRFHQDNSTTQQPRDTTTPFIPKPASKNHNNSNSSSGA) is disordered. Low complexity predominate over residues 40 to 49 (KNHNNSNSSS). The PB1 domain maps to 72-162 (VPPVTVVLEG…KRIRILPVKG (91 aa)).

This sequence belongs to the Aux/IAA family. As to quaternary structure, homodimers and heterodimers.

It localises to the nucleus. Its function is as follows. Aux/IAA proteins are short-lived transcriptional factors that function as repressors of early auxin response genes at low auxin concentrations. Repression is thought to result from the interaction with auxin response factors (ARFs), proteins that bind to the auxin-responsive promoter element (AuxRE). Formation of heterodimers with ARF proteins may alter their ability to modulate early auxin response genes expression. The protein is Auxin-responsive protein IAA33 (IAA33) of Arabidopsis thaliana (Mouse-ear cress).